A 913-amino-acid polypeptide reads, in one-letter code: Eukaryotic translation initiation factor 3 subunit C (913 aa).

The interval methionine 1–alanine 22 is disordered. The span at serine 11 to valine 20 shows a compositional bias: acidic residues. Phosphoserine occurs at positions 34, 165, 177, and 186. The tract at residues phenylalanine 157 to glutamate 285 is disordered. The segment covering aspartate 162–glutamate 171 has biased composition (acidic residues). Residues glycine 172 to alanine 184 are compositionally biased toward basic and acidic residues. Residues aspartate 214–asparagine 239 are compositionally biased toward acidic residues. A compositionally biased stretch (basic and acidic residues) spans methionine 244–arginine 263. A compositionally biased stretch (basic residues) spans lysine 264 to lysine 276. The region spanning phenylalanine 645–proline 821 is the PCI domain. A disordered region spans residues arginine 856 to glutamate 913. Positions glutamine 887–glutamine 898 are enriched in basic residues.

The protein belongs to the eIF-3 subunit C family. In terms of assembly, component of the eukaryotic translation initiation factor 3 (eIF-3) complex. The eIF-3 complex interacts with pix.

The protein resides in the cytoplasm. In terms of biological role, component of the eukaryotic translation initiation factor 3 (eIF-3) complex, which is involved in protein synthesis of a specialized repertoire of mRNAs and, together with other initiation factors, stimulates binding of mRNA and methionyl-tRNAi to the 40S ribosome. The eIF-3 complex specifically targets and initiates translation of a subset of mRNAs involved in cell proliferation. In Drosophila mojavensis (Fruit fly), this protein is Eukaryotic translation initiation factor 3 subunit C.